The following is a 513-amino-acid chain: ATP synthase subunit alpha (513 aa).

Position 169–176 (glycine 169–threonine 176) interacts with ATP.

This sequence belongs to the ATPase alpha/beta chains family. In terms of assembly, F-type ATPases have 2 components, CF(1) - the catalytic core - and CF(0) - the membrane proton channel. CF(1) has five subunits: alpha(3), beta(3), gamma(1), delta(1), epsilon(1). CF(0) has three main subunits: a(1), b(2) and c(9-12). The alpha and beta chains form an alternating ring which encloses part of the gamma chain. CF(1) is attached to CF(0) by a central stalk formed by the gamma and epsilon chains, while a peripheral stalk is formed by the delta and b chains.

The protein resides in the cell inner membrane. The enzyme catalyses ATP + H2O + 4 H(+)(in) = ADP + phosphate + 5 H(+)(out). Its function is as follows. Produces ATP from ADP in the presence of a proton gradient across the membrane. The alpha chain is a regulatory subunit. The sequence is that of ATP synthase subunit alpha from Shewanella sediminis (strain HAW-EB3).